We begin with the raw amino-acid sequence, 373 residues long: StAR-related lipid transfer protein 7, mitochondrial (373 aa).

The transit peptide at 1 to 61 (MFPRRPPATL…YSESSRCALL (61 aa)) directs the protein to the mitochondrion. Positions 89–114 (DEERIQEEELQRSINEMKRLEEMSNI) form a coiled coil. Residues 115 to 330 (FQSSGVENYP…LHMATLKAKN (216 aa)) form the START domain. Disordered stretches follow at residues 118–141 (SGVE…KDKE) and 347–373 (SSEA…IEYA).

Post-translationally, proteolytically cleaved by PARL. Expressed in epithelial cells of airways, peripheral bronchioles and alveoli, as well as in the basal cell layer of the epidermis (at protein level).

Its subcellular location is the mitochondrion. May play a protective role in mucosal tissues by preventing exaggerated allergic responses. This Mus musculus (Mouse) protein is StAR-related lipid transfer protein 7, mitochondrial (Stard7).